The primary structure comprises 137 residues: 5-hydroxytryptamine receptor 4 (137 aa).

Residues 12-35 traverse the membrane as a helical segment; that stretch reads TPLRVAVLLAGCWAIPVLISFLPI. Asn58 is a glycosylation site (N-linked (GlcNAc...) asparagine). The helical transmembrane segment at 67 to 90 threads the bilayer; that stretch reads NKPYAITCSVVAFYIPFLLMVLAY. The segment at 112–137 is disordered; that stretch reads APAEGRPPSADQHSTHRMRTETKAAK.

The protein belongs to the G-protein coupled receptor 1 family. Interacts (via C-terminus 330-346 AA) with GRK5; this interaction is promoted by 5-HT (serotonin).

The protein resides in the cell membrane. Its subcellular location is the endosome membrane. G-protein coupled receptor for 5-hydroxytryptamine (serotonin), a biogenic hormone that functions as a neurotransmitter, a hormone and a mitogen. Ligand binding causes a conformation change that triggers signaling via guanine nucleotide-binding proteins (G proteins) and modulates the activity of downstream effectors. HTR4 is coupled to G(s) G alpha proteins and mediates activation of adenylate cyclase activity. The sequence is that of 5-hydroxytryptamine receptor 4 (HTR4) from Sus scrofa (Pig).